Consider the following 335-residue polypeptide: Transmembrane protein 120B-B (335 aa).

A coiled-coil region spans residues 1–39 (MSLQKCQEEWGELEKEFQQLQETHKVYKQKLEELSSLQN). 6 consecutive transmembrane segments (helical) span residues 100–116 (SLYL…TLLS), 130–150 (FKLY…FVLH), 157–177 (VFNF…SILI), 193–213 (VSTF…YQMF), 268–288 (FLLP…MTLF), and 300–320 (QVFV…LTTL).

It belongs to the TMEM120 family.

The protein resides in the nucleus inner membrane. Necessary for efficient adipogenesis. Does not show ion channel activity. This chain is Transmembrane protein 120B-B (tmem120b-b), found in Xenopus laevis (African clawed frog).